The sequence spans 62 residues: Negative regulatory protein YxlE (62 aa).

Transmembrane regions (helical) follow at residues 7–27 (MILPLIVLQLALAVFALISCI) and 37–57 (WMWAAIIVCINIIGPILFFTV).

The protein resides in the cell membrane. Its function is as follows. Together with YxlD is important for negative regulation of sigma Y activity. In Bacillus subtilis (strain 168), this protein is Negative regulatory protein YxlE (yxlE).